Consider the following 239-residue polypeptide: Ribonuclease 3 (239 aa).

Residues 18 to 141 enclose the RNase III domain; it reads YLTLEKALGY…LMAGVYLEAG (124 aa). Glu-54 serves as a coordination point for Mg(2+). The active site involves Asp-58. Mg(2+) is bound by residues Ser-127 and Glu-130. Residue Glu-130 is part of the active site. The region spanning 168–237 is the DRBM domain; sequence DYKTALQELT…AYQALQKLKE (70 aa).

Belongs to the ribonuclease III family. In terms of assembly, homodimer. It depends on Mg(2+) as a cofactor.

The protein resides in the cytoplasm. It catalyses the reaction Endonucleolytic cleavage to 5'-phosphomonoester.. Digests double-stranded RNA. Involved in the processing of primary rRNA transcript to yield the immediate precursors to the large and small rRNAs (23S and 16S). Processes some mRNAs, and tRNAs when they are encoded in the rRNA operon. Processes pre-crRNA and tracrRNA of type II CRISPR loci if present in the organism. The sequence is that of Ribonuclease 3 from Helicobacter pylori (strain J99 / ATCC 700824) (Campylobacter pylori J99).